Reading from the N-terminus, the 706-residue chain is Elongation factor G (706 aa).

Positions 8-290 constitute a tr-type G domain; that stretch reads KRYRNIGIVA…GVIEYMPSPT (283 aa). GTP is bound by residues 17 to 24, 88 to 92, and 142 to 145; these read AHVDAGKT, DTPGH, and NKMD.

The protein belongs to the TRAFAC class translation factor GTPase superfamily. Classic translation factor GTPase family. EF-G/EF-2 subfamily.

The protein resides in the cytoplasm. Catalyzes the GTP-dependent ribosomal translocation step during translation elongation. During this step, the ribosome changes from the pre-translocational (PRE) to the post-translocational (POST) state as the newly formed A-site-bound peptidyl-tRNA and P-site-bound deacylated tRNA move to the P and E sites, respectively. Catalyzes the coordinated movement of the two tRNA molecules, the mRNA and conformational changes in the ribosome. The polypeptide is Elongation factor G (Chromohalobacter salexigens (strain ATCC BAA-138 / DSM 3043 / CIP 106854 / NCIMB 13768 / 1H11)).